Consider the following 147-residue polypeptide: D-aminoacyl-tRNA deacylase (147 aa).

The short motif at 136–137 is the Gly-cisPro motif, important for rejection of L-amino acids element; the sequence is GP.

It belongs to the DTD family. Homodimer.

It localises to the cytoplasm. The catalysed reaction is glycyl-tRNA(Ala) + H2O = tRNA(Ala) + glycine + H(+). The enzyme catalyses a D-aminoacyl-tRNA + H2O = a tRNA + a D-alpha-amino acid + H(+). Functionally, an aminoacyl-tRNA editing enzyme that deacylates mischarged D-aminoacyl-tRNAs. Also deacylates mischarged glycyl-tRNA(Ala), protecting cells against glycine mischarging by AlaRS. Acts via tRNA-based rather than protein-based catalysis; rejects L-amino acids rather than detecting D-amino acids in the active site. By recycling D-aminoacyl-tRNA to D-amino acids and free tRNA molecules, this enzyme counteracts the toxicity associated with the formation of D-aminoacyl-tRNA entities in vivo and helps enforce protein L-homochirality. The sequence is that of D-aminoacyl-tRNA deacylase from Streptococcus thermophilus (strain CNRZ 1066).